The sequence spans 466 residues: Fumarate hydratase class II (466 aa).

Residues 99–101 (SGT), 129–132 (HPND), 139–141 (SSN), and T187 contribute to the substrate site. The Proton donor/acceptor role is filled by H188. The active site involves S318. Residues S319 and 324–326 (KVN) each bind substrate.

This sequence belongs to the class-II fumarase/aspartase family. Fumarase subfamily. As to quaternary structure, homotetramer.

The protein localises to the cytoplasm. The catalysed reaction is (S)-malate = fumarate + H2O. Its pathway is carbohydrate metabolism; tricarboxylic acid cycle; (S)-malate from fumarate: step 1/1. Its function is as follows. Involved in the TCA cycle. Catalyzes the stereospecific interconversion of fumarate to L-malate. This is Fumarate hydratase class II from Thermus thermophilus (strain ATCC BAA-163 / DSM 7039 / HB27).